A 573-amino-acid polypeptide reads, in one-letter code: F-box/WD repeat-containing protein 5 (573 aa).

In terms of domain architecture, F-box spans 3–49 (EGGLPLLPDSLVYQIFLSLGPADVLAAGLVCRQWQAVSRDEFLWKEQ). One copy of the WD 1 repeat lies at 90 to 129 (EHTDQVLHLSFSHSGYQFASCSKDCTVKIWNNDLTISLLH). At S151 the chain carries Phosphoserine; by PLK4. Residues 308–316 (RRVFDSVLD) carry the D-box motif. 2 WD repeats span residues 470-509 (TPND…CLAK) and 511-551 (RHED…RVLQ).

The protein belongs to the FBXW5 family. Part of the SCF (SKP1-CUL1-F-box) E3 ubiquitin-protein ligase complex SCF(FBXW5) composed of CUL1, SKP1, RBX1 and FBXW5. Component of the DCX(FBXW5) E3 ubiquitin ligase complex, at least composed of (CUL4A or CUL4B), DDB1, FBXW5 and RBX1. Interacts with CDC20, TSC1, TSC2 and SASS6. Interacts with EPS8. Interacts with TNFAIP8L1; TNFAIP8L1 competes with TSC2 to bind FBXW5 increasing TSC2 stability by preventing its ubiquitination. Phosphorylated at Ser-151 by PLK4 during the G1/S transition, leading to inhibit its ability to ubiquitinate SASS6. In terms of processing, ubiquitinated and degraded by the APC/C complex during mitosis and G1 phase. In terms of tissue distribution, widely expressed in adult and embryonal tissues.

Its subcellular location is the cytoplasm. The protein operates within protein modification; protein ubiquitination. Its function is as follows. Substrate recognition component of both SCF (SKP1-CUL1-F-box protein) and DCX (DDB1-CUL4-X-box) E3 ubiquitin-protein ligase complexes. Substrate-specific adapter of the DCX(FBXW5) E3 ubiquitin-protein ligase complex which mediates the polyubiquitination and subsequent degradation of TSC2. May also act as a negative regulator of MAP3K7/TAK1 signaling in the interleukin-1B (IL1B) signaling pathway. Substrate recognition component of the SCF(FBXW5) E3 ubiquitin-protein ligase complex which mediates the ubiquitination and subsequent proteasomal degradation of SASS6 during S phase, leading to prevent centriole reduplication. The SCF(FBXW5) complex also mediates ubiquitination and degradation of actin-regulator EPS8 during G2 phase, leading to the transient degradation of EPS8 and subsequent cell shape changes required to allow mitotic progression. The sequence is that of F-box/WD repeat-containing protein 5 (Fbxw5) from Mus musculus (Mouse).